Here is a 494-residue protein sequence, read N- to C-terminus: Uric acid degradation bifunctional protein PucL (494 aa).

The tract at residues 1-174 (MFTMDDLNQM…EKGETQMKRT (174 aa)) is OHCU decarboxylase. His68 functions as the Proton donor; for OHCU decarboxylase activity in the catalytic mechanism. 5-hydroxy-2-oxo-4-ureido-2,5-dihydro-1H-imidazole-5-carboxylate contacts are provided by residues Pro69, 81 to 85 (SVREQ), and 116 to 120 (FILAV). Residues 175-494 (MSYGKGNVFA…AAEKCRSLKA (320 aa)) form a urate oxidase region. Lys179 serves as the catalytic Charge relay system; for urate oxidase activity. Catalysis depends on Lys190, which acts as the Charge relay system. The active-site Charge relay system; for urate oxidase activity is the Thr239. Positions 239, 240, 349, 366, 414, 415, and 441 each coordinate urate.

The protein in the N-terminal section; belongs to the OHCU decarboxylase family. It in the C-terminal section; belongs to the uricase family.

The enzyme catalyses 5-hydroxy-2-oxo-4-ureido-2,5-dihydro-1H-imidazole-5-carboxylate + H(+) = (S)-allantoin + CO2. It carries out the reaction urate + O2 + H2O = 5-hydroxyisourate + H2O2. It participates in purine metabolism; urate degradation; (S)-allantoin from urate: step 1/3. The protein operates within purine metabolism; urate degradation; (S)-allantoin from urate: step 3/3. Functionally, catalyzes two steps in the degradation of uric acid, i.e. the oxidation of uric acid to 5-hydroxyisourate (HIU) and the stereoselective decarboxylation of 2-oxo-4-hydroxy-4-carboxy-5-ureidoimidazoline (OHCU) to (S)-allantoin. The chain is Uric acid degradation bifunctional protein PucL (pucL) from Bacillus subtilis (strain 168).